Consider the following 397-residue polypeptide: CCA-adding enzyme (397 aa).

Residues Gly26 and Arg29 each coordinate ATP. Gly26 and Arg29 together coordinate CTP. The Mg(2+) site is built by Asp39 and Asp41. ATP-binding residues include Arg110, Asp153, Arg156, Arg159, and Arg162. CTP contacts are provided by Arg110, Asp153, Arg156, Arg159, and Arg162.

It belongs to the tRNA nucleotidyltransferase/poly(A) polymerase family. Bacterial CCA-adding enzyme type 3 subfamily. As to quaternary structure, homodimer. It depends on Mg(2+) as a cofactor.

It carries out the reaction a tRNA precursor + 2 CTP + ATP = a tRNA with a 3' CCA end + 3 diphosphate. The catalysed reaction is a tRNA with a 3' CCA end + 2 CTP + ATP = a tRNA with a 3' CCACCA end + 3 diphosphate. Functionally, catalyzes the addition and repair of the essential 3'-terminal CCA sequence in tRNAs without using a nucleic acid template. Adds these three nucleotides in the order of C, C, and A to the tRNA nucleotide-73, using CTP and ATP as substrates and producing inorganic pyrophosphate. tRNA 3'-terminal CCA addition is required both for tRNA processing and repair. Also involved in tRNA surveillance by mediating tandem CCA addition to generate a CCACCA at the 3' terminus of unstable tRNAs. While stable tRNAs receive only 3'-terminal CCA, unstable tRNAs are marked with CCACCA and rapidly degraded. This is CCA-adding enzyme from Bacillus cereus (strain ZK / E33L).